The chain runs to 168 residues: Xanthine-guanine phosphoribosyltransferase (168 aa).

Residues 46 to 47 (RG) and 101 to 109 (DDLVDSGVT) contribute to the 5-phospho-alpha-D-ribose 1-diphosphate site. D102 is a binding site for Mg(2+). Residue D105 participates in guanine binding. Xanthine-binding residues include D105 and V148. GMP is bound by residues 105–109 (DSGVT) and 147–148 (WV).

Belongs to the purine/pyrimidine phosphoribosyltransferase family. XGPT subfamily. As to quaternary structure, homotetramer. The cofactor is Mg(2+).

It localises to the cell inner membrane. The enzyme catalyses GMP + diphosphate = guanine + 5-phospho-alpha-D-ribose 1-diphosphate. It catalyses the reaction XMP + diphosphate = xanthine + 5-phospho-alpha-D-ribose 1-diphosphate. The catalysed reaction is IMP + diphosphate = hypoxanthine + 5-phospho-alpha-D-ribose 1-diphosphate. The protein operates within purine metabolism; GMP biosynthesis via salvage pathway; GMP from guanine: step 1/1. It functions in the pathway purine metabolism; XMP biosynthesis via salvage pathway; XMP from xanthine: step 1/1. In terms of biological role, purine salvage pathway enzyme that catalyzes the transfer of the ribosyl-5-phosphate group from 5-phospho-alpha-D-ribose 1-diphosphate (PRPP) to the N9 position of the 6-oxopurines guanine and xanthine to form the corresponding ribonucleotides GMP (guanosine 5'-monophosphate) and XMP (xanthosine 5'-monophosphate), with the release of PPi. To a lesser extent, also acts on hypoxanthine. This is Xanthine-guanine phosphoribosyltransferase from Gluconobacter oxydans (strain 621H) (Gluconobacter suboxydans).